Reading from the N-terminus, the 178-residue chain is Non-specific lipid transfer protein-like 1 (178 aa).

Positions 1–26 are cleaved as a signal peptide; that stretch reads MAVAARAAAVACLLVVGLAAVAGVDG. 2 disulfides stabilise this stretch: Cys50-Cys68 and Cys69-Cys110. Asn99 carries an N-linked (GlcNAc...) asparagine glycan. Ala149 carries the GPI-anchor amidated alanine lipid modification. A propeptide spans 150-178 (removed in mature form); that stretch reads AARSPMASTTAVLVVAAAVAAPLLAFFHF.

The protein belongs to the plant LTP family. Post-translationally, O-glycosylated on hydroxyprolines; noncontiguous hydroxylproline residues are glycosylated with arabinogalactan. As to expression, expressed in roots, stems, leaves, flowers and seeds.

The protein localises to the vacuole. The protein resides in the aleurone grain membrane. The chain is Non-specific lipid transfer protein-like 1 (LTPL1) from Oryza sativa subsp. japonica (Rice).